The chain runs to 144 residues: uncharacterized protein (144 aa).

This is an uncharacterized protein from Saccharomyces cerevisiae (strain ATCC 204508 / S288c) (Baker's yeast).